Consider the following 564-residue polypeptide: Adenine deaminase (564 aa).

It belongs to the metallo-dependent hydrolases superfamily. Adenine deaminase family. The cofactor is Mn(2+).

The catalysed reaction is adenine + H2O + H(+) = hypoxanthine + NH4(+). This Methylobacterium sp. (strain 4-46) protein is Adenine deaminase.